The primary structure comprises 239 residues: MEIFPAIDLKEGRCVRLYQGEFSKETVMNEDPVAQAIIFEKFGAKRLHIVDLDGAVAGESLNLSVIERICKAVRIPVQVGGGIRSLVAVEKLFSVGVDKVILGTAALYDKTFLEEAVLLYKEKIIVGIDAKNGFVATRGWLDVSEISYIDLAKQMEKIGVQTIVFTDISKDGTLAGPNIEQLELLQKSVAIRLIASGGVASIQDVKKLNDMNIYGVIIGKALYEKTIDLEEVLEVTKLC.

Asp8 acts as the Proton acceptor in catalysis. The active-site Proton donor is Asp129.

This sequence belongs to the HisA/HisF family.

The protein localises to the cytoplasm. It catalyses the reaction 1-(5-phospho-beta-D-ribosyl)-5-[(5-phospho-beta-D-ribosylamino)methylideneamino]imidazole-4-carboxamide = 5-[(5-phospho-1-deoxy-D-ribulos-1-ylimino)methylamino]-1-(5-phospho-beta-D-ribosyl)imidazole-4-carboxamide. Its pathway is amino-acid biosynthesis; L-histidine biosynthesis; L-histidine from 5-phospho-alpha-D-ribose 1-diphosphate: step 4/9. The sequence is that of 1-(5-phosphoribosyl)-5-[(5-phosphoribosylamino)methylideneamino] imidazole-4-carboxamide isomerase from Bacillus thuringiensis subsp. konkukian (strain 97-27).